The sequence spans 87 residues: Selenoprotein W (87 aa).

The cysteinyl-selenocysteine (Cys-Sec); redox-active cross-link spans cysteine 10–selenocysteine 13. Position 13 (selenocysteine 13) is a non-standard amino acid, selenocysteine. Cysteine 37 is modified (S-glutathionyl cysteine).

This sequence belongs to the SelWTH family. Selenoprotein W subfamily. In terms of assembly, interacts with DPYSL2, PRDX1, YWHAB, YWHAG, HSP70 and HSP90.

It localises to the cytoplasm. Functionally, plays a role as a glutathione (GSH)-dependent antioxidant. May be involved in a redox-related process. May play a role in the myopathies of selenium deficiency. This Sus scrofa (Pig) protein is Selenoprotein W.